The sequence spans 270 residues: tRNA pseudouridine synthase A (270 aa).

Asp60 (nucleophile) is an active-site residue. Tyr118 contacts substrate.

Belongs to the tRNA pseudouridine synthase TruA family. Homodimer.

The catalysed reaction is uridine(38/39/40) in tRNA = pseudouridine(38/39/40) in tRNA. In terms of biological role, formation of pseudouridine at positions 38, 39 and 40 in the anticodon stem and loop of transfer RNAs. The sequence is that of tRNA pseudouridine synthase A from Salmonella typhimurium (strain LT2 / SGSC1412 / ATCC 700720).